The primary structure comprises 120 residues: Large ribosomal subunit protein uL18 (120 aa).

The protein belongs to the universal ribosomal protein uL18 family. Part of the 50S ribosomal subunit; part of the 5S rRNA/L5/L18/L25 subcomplex. Contacts the 5S and 23S rRNAs.

Its function is as follows. This is one of the proteins that bind and probably mediate the attachment of the 5S RNA into the large ribosomal subunit, where it forms part of the central protuberance. This Bacillus cereus (strain ATCC 10987 / NRS 248) protein is Large ribosomal subunit protein uL18.